Here is a 413-residue protein sequence, read N- to C-terminus: Histidinol-phosphate aminotransferase, chloroplastic (413 aa).

A chloroplast-targeting transit peptide spans 1-35 (MGVIELCNTSSICIGRANPSCCSIERNQRRRIICM). An N6-(pyridoxal phosphate)lysine modification is found at Lys-273.

Belongs to the class-II pyridoxal-phosphate-dependent aminotransferase family. Histidinol-phosphate aminotransferase subfamily. As to quaternary structure, homodimer. Pyridoxal 5'-phosphate is required as a cofactor. As to expression, expressed in flowers, leaves, stems and roots.

Its subcellular location is the plastid. The protein localises to the chloroplast. The catalysed reaction is L-histidinol phosphate + 2-oxoglutarate = 3-(imidazol-4-yl)-2-oxopropyl phosphate + L-glutamate. It participates in amino-acid biosynthesis; L-histidine biosynthesis; L-histidine from 5-phospho-alpha-D-ribose 1-diphosphate: step 7/9. The polypeptide is Histidinol-phosphate aminotransferase, chloroplastic (HPA) (Nicotiana plumbaginifolia (Leadwort-leaved tobacco)).